Reading from the N-terminus, the 520-residue chain is Genome polyprotein (520 aa).

Residue serine 2 is modified to N-acetylserine; by host. Positions 2 to 23 (STNPKPQRKTKRNTNRRPQDVK) are interaction with STAT1. The segment at 2-58 (STNPKPQRKTKRNTNRRPQDVKFPGGGQIVGGVYLLTRRGPRLGVRATRKTSERSQP) is interaction with EIF2AK2/PKR. Positions 2–59 (STNPKPQRKTKRNTNRRPQDVKFPGGGQIVGGVYLLTRRGPRLGVRATRKTSERSQPR) are interaction with DDX3X. Residues 2–75 (STNPKPQRKT…PKARRPEGRA (74 aa)) are disordered. At 2–168 (STNPKPQRKT…EDGVNYATGN (167 aa)) the chain is on the cytoplasmic side. 2 short sequence motifs (nuclear localization signal) span residues 5–13 (PKPQRKTKR) and 38–43 (TRRGPR). Basic residues predominate over residues 7–16 (PQRKTKRNTN). Residue serine 53 is modified to Phosphoserine; by host. 2 consecutive short sequence motifs (nuclear localization signal) follow at residues 58–64 (PRGRRQP) and 66–71 (PKARRP). Positions 58–68 (PRGRRQPIPKA) are enriched in basic residues. A Phosphoserine; by host modification is found at serine 99. Residues 112–152 (PRRRSRNLGKVIDTLTCGFADLMGYIPLVGAPLGGASRALA) form an important for endoplasmic reticulum and mitochondrial localization region. Serine 116 carries the phosphoserine; by host PKA modification. An interaction with APOA2 region spans residues 122–173 (VIDTLTCGFADLMGYIPLVGAPLGGASRALAHGVRVLEDGVNYATGNLPGCS). The tract at residues 164 to 167 (YATG) is important for lipid droplets localization. A helical membrane pass occupies residues 169-189 (LPGCSFSIFLSALMSCLTTPA). The propeptide at 178-191 (LSALMSCLTTPASA) is ER anchor for the core protein, removed in mature form by host signal peptidase. At 190–358 (SAYEVRNVSG…AGAHWGVLAG (169 aa)) the chain is on the lumenal side. Asparagine 196, asparagine 209, asparagine 234, and asparagine 250 each carry an N-linked (GlcNAc...) asparagine; by host glycan. Positions 265 to 296 (LVGAATLCSAMYVGDLCGSVFLVSQLFTFSPR) are important for fusion. Asparagine 305 is a glycosylation site (N-linked (GlcNAc...) asparagine; by host). Residues 359 to 379 (LAYYSMVGNWAKVLIVMLLFA) form a helical membrane-spanning segment. Residues 380–520 (GVDGANTHTV…TPSPVVVGTT (141 aa)) lie on the Lumenal side of the membrane. Residues 385–411 (NTHTVGGTEGFATQRLTSLFALGPSQK) form an HVR1 region. Asparagine 418 is a glycosylation site (N-linked (GlcNAc...) asparagine; by host). 3 N-linked (GlcNAc...) (high mannose) asparagine; by host glycosylation sites follow: asparagine 424, asparagine 431, and asparagine 449. A disulfide bond links cysteine 453 and cysteine 460. Residues 474–479 (TYAEPS) are HVR2. The tract at residues 480–493 (ISEQRPYCWHYAPR) is CD81-binding 1. 2 disulfide bridges follow: cysteine 487-cysteine 495 and cysteine 504-cysteine 509.

It belongs to the hepacivirus polyprotein family. In terms of assembly, homooligomer. Interacts with E1 (via C-terminus). Interacts with the non-structural protein 5A. Interacts (via N-terminus) with host STAT1 (via SH2 domain); this interaction results in decreased STAT1 phosphorylation and ubiquitin-mediated proteasome-dependent STAT1 degradation, leading to decreased IFN-stimulated gene transcription. Interacts with host STAT3; this interaction constitutively activates STAT3. Interacts with host LTBR receptor. Interacts with host TNFRSF1A receptor and possibly induces apoptosis. Interacts with host HNRPK. Interacts with host YWHAE. Interacts with host UBE3A/E6AP. Interacts with host DDX3X. Interacts with host APOA2. Interacts with host RXRA protein. Interacts with host SP110 isoform 3/Sp110b; this interaction sequesters the transcriptional corepressor SP110 away from the nucleus. Interacts with host CREB3 nuclear transcription protein; this interaction triggers cell transformation. Interacts with host ACY3. Interacts with host C1QR1. Interacts with host RBM24; this interaction, which enhances the interaction of the mature core protein with 5'-UTR, may inhibit viral translation and favor replication. Interacts with host EIF2AK2/PKR; this interaction induces the autophosphorylation of EIF2AK2. Part of the viral assembly initiation complex composed of NS2, E1, E2, NS3, NS4A, NS5A and the mature core protein. Forms a heterodimer with envelope glycoprotein E2. Interacts with mature core protein. Interacts with protease NS2. The heterodimer E1/E2 interacts with host CLDN1; this interaction plays a role in viral entry into host cell. Interacts with host SPSB2 (via C-terminus). Part of the viral assembly initiation complex composed of NS2, E1, E2, NS3, NS4A, NS5A and the mature core protein. As to quaternary structure, forms a heterodimer with envelope glycoprotein E1. Interacts with host CD81 and SCARB1 receptors; these interactions play a role in viral entry into host cell. Interacts with host EIF2AK2/PKR; this interaction inhibits EIF2AK2 and probably allows the virus to evade the innate immune response. Interacts with host CD209/DC-SIGN and CLEC4M/DC-SIGNR. Interact with host SPCS1; this interaction is essential for viral particle assembly. Interacts with protease NS2. The heterodimer E1/E2 interacts with host CLDN1; this interaction plays a role in viral entry into host cell. Part of the viral assembly initiation complex composed of NS2, E1, E2, NS3, NS4A, NS5A and the mature core protein. Specific enzymatic cleavages in vivo yield mature proteins. The structural proteins, core, E1, E2 and p7 are produced by proteolytic processing by host signal peptidases. The core protein precursor is synthesized as a 23 kDa, which is retained in the ER membrane through the hydrophobic signal peptide. Cleavage by the signal peptidase releases the 21 kDa mature core protein. The cleavage of the core protein precursor occurs between aminoacids 176 and 188 but the exact cleavage site is not known. Some degraded forms of the core protein appear as well during the course of infection. The other proteins (p7, NS2, NS3, NS4A, NS4B, NS5A and NS5B) are cleaved by the viral proteases. Autoprocessing between NS2 and NS3 is mediated by the NS2 cysteine protease catalytic domain and regulated by the NS3 N-terminal domain. In terms of processing, phosphorylated by host PKC and PKA. Post-translationally, ubiquitinated; mediated by UBE3A and leading to core protein subsequent proteasomal degradation. Highly N-glycosylated.

It is found in the host endoplasmic reticulum membrane. The protein localises to the host mitochondrion membrane. Its subcellular location is the virion. The protein resides in the host cytoplasm. It localises to the host nucleus. It is found in the host lipid droplet. The protein localises to the virion membrane. Its function is as follows. Packages viral RNA to form a viral nucleocapsid, and promotes virion budding. Participates in the viral particle production as a result of its interaction with the non-structural protein 5A. Binds RNA and may function as a RNA chaperone to induce the RNA structural rearrangements taking place during virus replication. Modulates viral translation initiation by interacting with viral IRES and 40S ribosomal subunit. Affects various cell signaling pathways, host immunity and lipid metabolism. Prevents the establishment of cellular antiviral state by blocking the interferon-alpha/beta (IFN-alpha/beta) and IFN-gamma signaling pathways and by blocking the formation of phosphorylated STAT1 and promoting ubiquitin-mediated proteasome-dependent degradation of STAT1. Activates STAT3 leading to cellular transformation. Regulates the activity of cellular genes, including c-myc and c-fos. May repress the promoter of p53, and sequester CREB3 and SP110 isoform 3/Sp110b in the cytoplasm. Represses cell cycle negative regulating factor CDKN1A, thereby interrupting an important check point of normal cell cycle regulation. Targets transcription factors involved in the regulation of inflammatory responses and in the immune response: suppresses TNF-induced NF-kappa-B activation, and activates AP-1. Binds to dendritic cells (DCs) via C1QR1, resulting in down-regulation of T-lymphocytes proliferation. Alters lipid metabolism by interacting with hepatocellular proteins involved in lipid accumulation and storage. Induces up-regulation of FAS promoter activity, and thereby contributes to the increased triglyceride accumulation in hepatocytes (steatosis). Forms a heterodimer with envelope glycoprotein E2, which mediates virus attachment to the host cell, virion internalization through clathrin-dependent endocytosis and fusion with host membrane. Fusion with the host cell is most likely mediated by both E1 and E2, through conformational rearrangements of the heterodimer required for fusion rather than a classical class II fusion mechanism. E1/E2 heterodimer binds host apolipoproteins such as APOB and ApoE thereby forming a lipo-viro-particle (LVP). APOE associated to the LVP allows the initial virus attachment to cell surface receptors such as the heparan sulfate proteoglycans (HSPGs), syndecan-1 (SDC1), syndecan-1 (SDC2), the low-density lipoprotein receptor (LDLR) and scavenger receptor class B type I (SCARB1). The cholesterol transfer activity of SCARB1 allows E2 exposure and binding of E2 to SCARB1 and the tetraspanin CD81. E1/E2 heterodimer binding on CD81 activates the epithelial growth factor receptor (EGFR) signaling pathway. Diffusion of the complex E1-E2-EGFR-SCARB1-CD81 to the cell lateral membrane allows further interaction with Claudin 1 (CLDN1) and occludin (OCLN) to finally trigger HCV entry. In terms of biological role, forms a heterodimer with envelope glycoprotein E1, which mediates virus attachment to the host cell, virion internalization through clathrin-dependent endocytosis and fusion with host membrane. Fusion with the host cell is most likely mediated by both E1 and E2, through conformational rearrangements of the heterodimer required for fusion rather than a classical class II fusion mechanism. The interaction between envelope glycoprotein E2 and host apolipoprotein E/APOE allows the proper assembly, maturation and infectivity of the viral particles. This interaction is probably promoted via the up-regulation of cellular autophagy by the virus. E1/E2 heterodimer binds host apolipoproteins such as APOB and APOE thereby forming a lipo-viro-particle (LVP). APOE associated to the LVP allows the initial virus attachment to cell surface receptors such as the heparan sulfate proteoglycans (HSPGs), syndecan-1 (SDC1), syndecan-1 (SDC2), the low-density lipoprotein receptor (LDLR) and scavenger receptor class B type I (SCARB1). The cholesterol transfer activity of SCARB1 allows E2 exposure and binding of E2 to SCARB1 and the tetraspanin CD81. E1/E2 heterodimer binding on CD81 activates the epithelial growth factor receptor (EGFR) signaling pathway. Diffusion of the complex E1-E2-EGFR-SCARB1-CD81 to the cell lateral membrane allows further interaction with Claudin 1 (CLDN1) and occludin (OCLN) to finally trigger HCV entry. Inhibits host EIF2AK2/PKR activation, preventing the establishment of an antiviral state. Viral ligand for CD209/DC-SIGN and CLEC4M/DC-SIGNR, which are respectively found on dendritic cells (DCs), and on liver sinusoidal endothelial cells and macrophage-like cells of lymph node sinuses. These interactions allow the capture of circulating HCV particles by these cells and subsequent facilitated transmission to permissive cells such as hepatocytes and lymphocyte subpopulations. The polypeptide is Genome polyprotein (Hepatitis C virus (isolate HCV-KF) (HCV)).